A 338-amino-acid polypeptide reads, in one-letter code: Ketol-acid reductoisomerase (NADP(+)) (338 aa).

A KARI N-terminal Rossmann domain is found at Met-1–Thr-181. Residues Tyr-24–Gln-27, Arg-47, Ser-50, Thr-52, and Asp-82–Gln-85 contribute to the NADP(+) site. His-107 is an active-site residue. Gly-133 contacts NADP(+). The 146-residue stretch at Thr-182 to Ile-327 folds into the KARI C-terminal knotted domain. Mg(2+) contacts are provided by Asp-190, Glu-194, Glu-226, and Glu-230. Residue Ser-251 participates in substrate binding.

Belongs to the ketol-acid reductoisomerase family. Requires Mg(2+) as cofactor.

The catalysed reaction is (2R)-2,3-dihydroxy-3-methylbutanoate + NADP(+) = (2S)-2-acetolactate + NADPH + H(+). It carries out the reaction (2R,3R)-2,3-dihydroxy-3-methylpentanoate + NADP(+) = (S)-2-ethyl-2-hydroxy-3-oxobutanoate + NADPH + H(+). It functions in the pathway amino-acid biosynthesis; L-isoleucine biosynthesis; L-isoleucine from 2-oxobutanoate: step 2/4. Its pathway is amino-acid biosynthesis; L-valine biosynthesis; L-valine from pyruvate: step 2/4. Involved in the biosynthesis of branched-chain amino acids (BCAA). Catalyzes an alkyl-migration followed by a ketol-acid reduction of (S)-2-acetolactate (S2AL) to yield (R)-2,3-dihydroxy-isovalerate. In the isomerase reaction, S2AL is rearranged via a Mg-dependent methyl migration to produce 3-hydroxy-3-methyl-2-ketobutyrate (HMKB). In the reductase reaction, this 2-ketoacid undergoes a metal-dependent reduction by NADPH to yield (R)-2,3-dihydroxy-isovalerate. This chain is Ketol-acid reductoisomerase (NADP(+)), found in Pseudomonas aeruginosa (strain LESB58).